A 365-amino-acid polypeptide reads, in one-letter code: uncharacterized protein (365 aa).

Residue 29-36 participates in ATP binding; sequence GPLNSGKS.

This sequence belongs to the archaeal ATPase family.

This is an uncharacterized protein from Methanocaldococcus jannaschii (strain ATCC 43067 / DSM 2661 / JAL-1 / JCM 10045 / NBRC 100440) (Methanococcus jannaschii).